The chain runs to 367 residues: Cystinosin (367 aa).

An N-terminal signal peptide occupies residues 1-22 (MRRNWLLILTLFLLMFIEKYES). Residues 23 to 125 (TVSLTAPPTV…LVIHSRIVSI (103 aa)) are Lumenal-facing. 6 N-linked (GlcNAc...) asparagine glycosylation sites follow: Asn-36, Asn-51, Asn-66, Asn-84, Asn-104, and Asn-107. In terms of domain architecture, PQ-loop 1 spans 123-189 (VSIINQVIGW…LLWVPYIQEE (67 aa)). Residues 126 to 150 (INQVIGWIYFMAWSVSFYPQVIQNW) traverse the membrane as a helical segment. Over 151–159 (RRKSVIGLS) the chain is Cytoplasmic. A helical membrane pass occupies residues 160–179 (FDFLALNLTGFVAYSVFNIG). Residue Asn-166 coordinates L-cystine. Over 180–202 (LLWVPYIQEEFLLKYPNGVNPVD) the chain is Lumenal. A helical membrane pass occupies residues 203-225 (SNDAFFSLHAVALTLIVILQCCL). H(+) is bound at residue Asp-205. Residues 226 to 234 (YERGNQRVS) lie on the Cytoplasmic side of the membrane. A helical membrane pass occupies residues 235–257 (WPSIGFLVLAWLFVLVTMIVAAV). Topologically, residues 258–263 (GITTWL) are lumenal. Positions 263–328 (LQFLFCFSYI…QSYNNDQWTL (66 aa)) constitute a PQ-loop 2 domain. The helical transmembrane segment at 264–289 (QFLFCFSYIKLIITLIKYFPQAYMNF) threads the bilayer. 3 residues coordinate L-cystine: Lys-273, Lys-280, and Tyr-281. The Cytoplasmic segment spans residues 290–298 (YYKSTKGWS). A helical transmembrane segment spans residues 299–308 (IGGVLLDFTG). Asp-305 is a binding site for L-cystine. Asp-305 is a binding site for H(+). Residues 309-331 (GSFSLLQMFLQSYNNDQWTLIFG) lie on the Lumenal side of the membrane. A helical membrane pass occupies residues 332–354 (DPTKFGLGVFTIFFDVVFFIQHF). Asp-346 contacts H(+). The Cytoplasmic segment spans residues 355-367 (YLYRKKPGYDQLN). The short motif at 362–366 (GYDQL) is the Lysosomal targeting motif element.

The protein belongs to the cystinosin family. Interacts with components of the V-ATPase complex. Interacts with components of the Ragulator complex. Interacts with RRAGA/RagA and RRAGC/RagC. Interacts with AP-3 complex subunit mu (AP3M1 or AP3M2).

Its subcellular location is the lysosome membrane. The protein resides in the melanosome membrane. It carries out the reaction L-cystine(out) + H(+)(out) = L-cystine(in) + H(+)(in). With respect to regulation, switches between a lumen- and a cytosol-open conformation: pH induces conformational changes and shifts the equilibrium to facilitate the transition between the lumen- and cytosol-open conformation, thereby promoting cystine transport. Protonation of specific aspartate residues (Asp-205, Asp-305 and Asp-346) favors the cytosol-open conformation. In terms of biological role, cystine/H(+) symporter that mediates export of cystine, the oxidized dimer of cysteine, from lysosomes. Plays an important role in melanin synthesis by catalyzing cystine export from melanosomes, possibly by inhibiting pheomelanin synthesis. In addition to cystine export, also acts as a positive regulator of mTORC1 signaling in kidney proximal tubular cells, via interactions with components of the v-ATPase and Ragulator complexes. Also involved in small GTPase-regulated vesicle trafficking and lysosomal localization of LAMP2A, independently of cystine transporter activity. In Mus musculus (Mouse), this protein is Cystinosin.